Here is a 426-residue protein sequence, read N- to C-terminus: Glutamate-1-semialdehyde 2,1-aminomutase (426 aa).

At lysine 265 the chain carries N6-(pyridoxal phosphate)lysine.

Belongs to the class-III pyridoxal-phosphate-dependent aminotransferase family. HemL subfamily. As to quaternary structure, homodimer. Pyridoxal 5'-phosphate is required as a cofactor.

It localises to the cytoplasm. The enzyme catalyses (S)-4-amino-5-oxopentanoate = 5-aminolevulinate. It functions in the pathway porphyrin-containing compound metabolism; protoporphyrin-IX biosynthesis; 5-aminolevulinate from L-glutamyl-tRNA(Glu): step 2/2. The protein is Glutamate-1-semialdehyde 2,1-aminomutase of Escherichia coli (strain SMS-3-5 / SECEC).